The following is a 510-amino-acid chain: GMP synthase [glutamine-hydrolyzing] (510 aa).

Residues 5-195 enclose the Glutamine amidotransferase type-1 domain; it reads LVIVVDFGGQ…LYEICKADGD (191 aa). Cys82 serves as the catalytic Nucleophile. Catalysis depends on residues His169 and Glu171. The 190-residue stretch at 196-385 folds into the GMPS ATP-PPase domain; it reads WTMENFLEEQ…LEMPEYLVYR (190 aa). 223–229 contacts ATP; sequence SGGVDSS.

Homodimer.

It carries out the reaction XMP + L-glutamine + ATP + H2O = GMP + L-glutamate + AMP + diphosphate + 2 H(+). The protein operates within purine metabolism; GMP biosynthesis; GMP from XMP (L-Gln route): step 1/1. Its function is as follows. Catalyzes the synthesis of GMP from XMP. The chain is GMP synthase [glutamine-hydrolyzing] from Finegoldia magna (strain ATCC 29328 / DSM 20472 / WAL 2508) (Peptostreptococcus magnus).